Here is a 228-residue protein sequence, read N- to C-terminus: Urease accessory protein UreF (228 aa).

The protein belongs to the UreF family. In terms of assembly, ureD, UreF and UreG form a complex that acts as a GTP-hydrolysis-dependent molecular chaperone, activating the urease apoprotein by helping to assemble the nickel containing metallocenter of UreC. The UreE protein probably delivers the nickel.

It localises to the cytoplasm. Its function is as follows. Required for maturation of urease via the functional incorporation of the urease nickel metallocenter. In Prochlorococcus marinus subsp. pastoris (strain CCMP1986 / NIES-2087 / MED4), this protein is Urease accessory protein UreF.